A 57-amino-acid polypeptide reads, in one-letter code: Large ribosomal subunit protein eL20 (57 aa).

The span at 1–10 (MSEFTVTGTF) shows a compositional bias: polar residues. Positions 1–21 (MSEFTVTGTFESRDGNQPFEK) are disordered.

It belongs to the eukaryotic ribosomal protein eL20 family. In terms of assembly, part of the 50S ribosomal subunit. Binds 23S rRNA.

In Halomicrobium mukohataei (strain ATCC 700874 / DSM 12286 / JCM 9738 / NCIMB 13541) (Haloarcula mukohataei), this protein is Large ribosomal subunit protein eL20.